We begin with the raw amino-acid sequence, 213 residues long: Peptidyl-tRNA hydrolase (213 aa).

TRNA is bound at residue Y26. H31 serves as the catalytic Proton acceptor. TRNA contacts are provided by Y78, N80, and N126.

Belongs to the PTH family. Monomer.

It is found in the cytoplasm. The catalysed reaction is an N-acyl-L-alpha-aminoacyl-tRNA + H2O = an N-acyl-L-amino acid + a tRNA + H(+). In terms of biological role, hydrolyzes ribosome-free peptidyl-tRNAs (with 1 or more amino acids incorporated), which drop off the ribosome during protein synthesis, or as a result of ribosome stalling. Catalyzes the release of premature peptidyl moieties from peptidyl-tRNA molecules trapped in stalled 50S ribosomal subunits, and thus maintains levels of free tRNAs and 50S ribosomes. This Nostoc punctiforme (strain ATCC 29133 / PCC 73102) protein is Peptidyl-tRNA hydrolase.